Consider the following 437-residue polypeptide: Protein arginine methyltransferase NDUFAF7, mitochondrial (437 aa).

Residues Met1–Ser42 constitute a mitochondrion transit peptide.

This sequence belongs to the NDUFAF7 family.

Its subcellular location is the mitochondrion. The catalysed reaction is L-arginyl-[protein] + 2 S-adenosyl-L-methionine = N(omega),N(omega)'-dimethyl-L-arginyl-[protein] + 2 S-adenosyl-L-homocysteine + 2 H(+). Functionally, arginine methyltransferase involved in the assembly or stability of mitochondrial NADH:ubiquinone oxidoreductase complex (complex I). Acts by mediating symmetric dimethylation of 'Arg-118' of ndufs2 after it assembles into the complex I, stabilizing the early intermediate complex. The protein is Protein arginine methyltransferase NDUFAF7, mitochondrial of Xenopus laevis (African clawed frog).